The following is a 412-amino-acid chain: DnaJ homolog subfamily A member 2 (412 aa).

A J domain is found at 8 to 70 (KLYDILGVPP…EKRELYDRYG (63 aa)). Lys39 carries the post-translational modification N6-acetyllysine. Ser78 and Ser123 each carry phosphoserine. The CR-type zinc finger occupies 130 to 214 (GKTTKLQLSK…CEGKKVIKEV (85 aa)). Residue Lys134 forms a Glycyl lysine isopeptide (Lys-Gly) (interchain with G-Cter in SUMO2) linkage. Cys143 and Cys146 together coordinate Zn(2+). Residues 143-150 (CSACSGQG) form a CXXCXGXG motif repeat. Position 152 is an N6-acetyllysine (Lys152). Residues Cys159, Cys162, Cys186, Cys189, Cys202, and Cys205 each coordinate Zn(2+). 3 CXXCXGXG motif repeats span residues 159 to 166 (CSACRGRG), 186 to 193 (CSDCNGEG), and 202 to 209 (CKKCEGKK). The tract at residues 365 to 412 (IGETEEVELQEFDSTRGSGGGQRREAYNDSSDEESSSHHGPGVQCAHQ) is disordered. At Tyr391 the chain carries Phosphotyrosine. Phosphoserine is present on residues Ser394 and Ser395. A Cysteine methyl ester modification is found at Cys409. Cys409 is lipidated: S-farnesyl cysteine. A propeptide spans 410 to 412 (AHQ) (removed in mature form).

The protein resides in the membrane. In terms of biological role, co-chaperone of Hsc70. Stimulates ATP hydrolysis and the folding of unfolded proteins mediated by HSPA1A/B (in vitro). The protein is DnaJ homolog subfamily A member 2 (Dnaja2) of Mus musculus (Mouse).